Here is a 363-residue protein sequence, read N- to C-terminus: Cell division cycle-associated protein 3 (363 aa).

Residues 1–12 (MGSAESKAQVTP) are compositionally biased toward polar residues. Disordered stretches follow at residues 1-81 (MGSA…TPLR), 126-152 (VESQ…KAET), 191-210 (MNDQ…EESP), and 231-363 (ENLN…HSNS). The F-box-like stretch occupies residues 93–152 (KQLSEVFVAEDSSTEGGPLGFTGPEATNLERQVVESQTAPPAGEHVNDHEVEPSVEKAET). Residues 137-152 (HVNDHEVEPSVEKAET) show a composition bias toward basic and acidic residues. Positions 192-210 (NDQEESPIAETMNDQEESP) are enriched in acidic residues. Positions 259-285 (SVVSTESTQATGQQQKTRGKSPRSSGV) are enriched in polar residues. A compositionally biased stretch (low complexity) spans 296–308 (LLSSSSGRSPLRI). Positions 311–321 (EDNSPNTNTQH) are enriched in polar residues. The KEN box motif lies at 353-355 (KEN).

Interacts with wee1, when wee1 is phosphorylated at 'Ser-38'. Post-translationally, phosphorylated. Ubiquitinated and degraded by the APC/C-Cdh1 complex during G1 phase.

The protein localises to the cytoplasm. It is found in the cytosol. Its pathway is protein modification; protein ubiquitination. In terms of biological role, F-box-like protein which is required for entry into mitosis. Acts by participating in E3 ligase complexes that mediate the ubiquitination and degradation of WEE1 kinase at G2/M phase. The sequence is that of Cell division cycle-associated protein 3 (cdca3) from Xenopus laevis (African clawed frog).